Consider the following 296-residue polypeptide: 4-hydroxy-tetrahydrodipicolinate synthase (296 aa).

Thr-49 is a binding site for pyruvate. Tyr-137 (proton donor/acceptor) is an active-site residue. The Schiff-base intermediate with substrate role is filled by Lys-166. Residue Val-208 coordinates pyruvate.

Belongs to the DapA family. In terms of assembly, homotetramer; dimer of dimers.

It is found in the cytoplasm. It carries out the reaction L-aspartate 4-semialdehyde + pyruvate = (2S,4S)-4-hydroxy-2,3,4,5-tetrahydrodipicolinate + H2O + H(+). The protein operates within amino-acid biosynthesis; L-lysine biosynthesis via DAP pathway; (S)-tetrahydrodipicolinate from L-aspartate: step 3/4. Its function is as follows. Catalyzes the condensation of (S)-aspartate-beta-semialdehyde [(S)-ASA] and pyruvate to 4-hydroxy-tetrahydrodipicolinate (HTPA). This Desulforamulus reducens (strain ATCC BAA-1160 / DSM 100696 / MI-1) (Desulfotomaculum reducens) protein is 4-hydroxy-tetrahydrodipicolinate synthase.